The sequence spans 832 residues: MVNFTVEQIREIMGKPHNIRNMSVIAHVDHGKSTLTDSLVCKAGIIASKAAGDARFTDTRADEQERCITIKSTGISLFFEHDLEDGKGRQPFLINLIDSPGHVDFSSEVTAALRVTDGALVVVDAVDGVCIQTETVLRQALNERIRPVLHVNKVDRALLELQWEAEDIYQNFTRVIENVNVIISTYSDELMGDVQVFPEKGTVSFGSGLHGWAFTIEKFARIYAKKFGVEKSKMMQRLWGDNFFNPETKKFTKTQEPGSKRAFCQFIMEPICQLFSSIMNGDKAKYEKMLVNLGVELKGDDKALVDKPLLKKVMQLWLSAGDTLLEMIVTHLPSPAAAQKYRVENLYEGPQDDETAKGIRNCDPDAPLCMFVSKMVPTSDKGRFYAFGRVFSGTVATGQKVRIQGPRYVPGGKEDLNIKNIQRTVLMMGRYVEQIPDVPAGNTVGLVGIDQYLLKSGTITTSETAHNIASMKYSVSPVVRVAVRPKDNKELPKLVEGLKKLSKSDPLVVCSKEETGEHIIAGCGELHVEICLQDLQQEYAQIEIVASDPIVSYRETVVNLSNQTCLSKSPNKHNRLYMTAEPLPDGLTDDIEEGKVSPRDDPKERSNLLHDKYGFDKNAAMKIWCFGPETTGPNIMVDVTTGIQYLTEIKDHCNSAFQWATKEGILCEEDMRGIRFNLLDVTLHADAIHRGAGQITPTCRRVMYAAALTASPRLLEPMFLVEISAPQEVVGGIYATLNQRRGHVFHEEPKSGTPQVEIKAYLPVADSFKFTTVLRAATSGKAFPQCVFDHWELINGDPLEKGSKTEELVKAIRRRKNIKEEIPALDNYLDKL.

The 320-residue stretch at 17 to 336 folds into the tr-type G domain; the sequence is HNIRNMSVIA…MIVTHLPSPA (320 aa). 26 to 33 serves as a coordination point for GTP; it reads AHVDHGKS. Phosphothreonine occurs at positions 57 and 59. GTP is bound by residues 152 to 155 and 207 to 209; these read NKVD and SGL. Residues 580-608 are disordered; the sequence is AEPLPDGLTDDIEEGKVSPRDDPKERSNL. The span at 593–608 shows a compositional bias: basic and acidic residues; sequence EGKVSPRDDPKERSNL. H689 is modified (diphthamide).

It belongs to the TRAFAC class translation factor GTPase superfamily. Classic translation factor GTPase family. EF-G/EF-2 subfamily.

Its subcellular location is the cytoplasm. The catalysed reaction is GTP + H2O = GDP + phosphate + H(+). Catalyzes the GTP-dependent ribosomal translocation step during translation elongation. During this step, the ribosome changes from the pre-translocational (PRE) to the post-translocational (POST) state as the newly formed A-site-bound peptidyl-tRNA and P-site-bound deacylated tRNA move to the P and E sites, respectively. Catalyzes the coordinated movement of the two tRNA molecules, the mRNA and conformational changes in the ribosome. In Cryptosporidium parvum, this protein is Elongation factor 2.